The chain runs to 414 residues: Histidine--tRNA ligase (414 aa).

It belongs to the class-II aminoacyl-tRNA synthetase family. As to quaternary structure, homodimer.

The protein localises to the cytoplasm. It carries out the reaction tRNA(His) + L-histidine + ATP = L-histidyl-tRNA(His) + AMP + diphosphate + H(+). The protein is Histidine--tRNA ligase of Pelobacter propionicus (strain DSM 2379 / NBRC 103807 / OttBd1).